We begin with the raw amino-acid sequence, 174 residues long: Protein TM_1551 (174 aa).

The region spanning 2-174 (IGEHPYVKWA…IYRFTVERYK (173 aa)) is the AMMECR1 domain.

The chain is Protein TM_1551 from Thermotoga maritima (strain ATCC 43589 / DSM 3109 / JCM 10099 / NBRC 100826 / MSB8).